The chain runs to 542 residues: Protein OS-9 homolog (542 aa).

Residues 1–21 (MQAKIIYALSAISALIPLGSS) form the signal peptide. Asn-52 and Asn-74 each carry an N-linked (GlcNAc...) asparagine glycan. 4 disulfide bridges follow: Cys-70–Cys-258, Cys-117–Cys-130, Cys-193–Cys-227, and Cys-208–Cys-239. Residues 115–241 (ERCIFYQAGF…QVTIPELCNL (127 aa)) enclose the MRH domain. 6 residues coordinate a mannooligosaccharide derivative: Trp-125, Gln-137, Asp-194, Arg-200, Glu-223, and Tyr-229. A glycan (N-linked (GlcNAc...) asparagine) is linked at Asn-380. Positions 497-528 (NARMDDDESTSHTTRDIGEAGSQTTGNTESEV) are disordered. The segment covering 505–514 (STSHTTRDIG) has biased composition (basic and acidic residues). A compositionally biased stretch (polar residues) spans 517–528 (GSQTTGNTESEV). Positions 539 to 542 (HDEL) match the Prevents secretion from ER motif.

Belongs to the OS-9 family. Homodimer. Component of the HRD1 ubiquitin ligase complex which contains the E3 ligase HRD1, its cofactors HRD3, USA1 and DER1, substrate recruiting factor YOS9 and CDC48-binding protein UBX2. Within the complex, interacts (via N-terminus) with HRD3. In ERAD-L, HRD3 and YOS9 jointly bind misfolded glycoproteins in the endoplasmic reticulum (ER) lumen. Movement of ERAD-L substrates through the ER membrane is facilitated by HRD1 and DER1 which have lateral gates facing each other and which distort the membrane region between the lateral gates, making it much thinner than a normal phospholipid bilayer. Substrates insert into the membrane as a hairpin loop with one strand interacting with DER1 and the other with HRD1. The HRD1 complex interacts with the heterotrimeric CDC48-NPL4-UFD1 ATPase complex which is recruited by UBX2 via its interaction with CDC48 and which moves ubiquitinated substrates to the cytosol for targeting to the proteasome. Interacts with KAR2 and EMP47. Interacts with misfolded ER lumenal proteins like PCR1. Interacts with the GPI-anchored proteins GAS1 and MKC7.

It is found in the endoplasmic reticulum membrane. Its function is as follows. Lectin involved in the quality control of the secretory pathway. As a member of the endoplasmic reticulum-associated degradation lumenal (ERAD-L) surveillance system, targets misfolded endoplasmic reticulum lumenal glycoproteins for degradation. The recognition of targets is N-glycan specific. Functions in recruiting misfolded protein substrates in conjunction with HRD3. This Saccharomyces cerevisiae (strain ATCC 204508 / S288c) (Baker's yeast) protein is Protein OS-9 homolog (YOS9).